Reading from the N-terminus, the 283-residue chain is Bifunctional protein FolD (283 aa).

166–168 (GAS) serves as a coordination point for NADP(+).

Belongs to the tetrahydrofolate dehydrogenase/cyclohydrolase family. In terms of assembly, homodimer.

The catalysed reaction is (6R)-5,10-methylene-5,6,7,8-tetrahydrofolate + NADP(+) = (6R)-5,10-methenyltetrahydrofolate + NADPH. The enzyme catalyses (6R)-5,10-methenyltetrahydrofolate + H2O = (6R)-10-formyltetrahydrofolate + H(+). Its pathway is one-carbon metabolism; tetrahydrofolate interconversion. In terms of biological role, catalyzes the oxidation of 5,10-methylenetetrahydrofolate to 5,10-methenyltetrahydrofolate and then the hydrolysis of 5,10-methenyltetrahydrofolate to 10-formyltetrahydrofolate. This Coxiella burnetii (strain CbuG_Q212) (Coxiella burnetii (strain Q212)) protein is Bifunctional protein FolD.